A 151-amino-acid chain; its full sequence is Aspartate carbamoyltransferase regulatory chain (151 aa).

Zn(2+) contacts are provided by C107, C112, C135, and C138.

Belongs to the PyrI family. Contains catalytic and regulatory chains. It depends on Zn(2+) as a cofactor.

Its function is as follows. Involved in allosteric regulation of aspartate carbamoyltransferase. The chain is Aspartate carbamoyltransferase regulatory chain from Psychromonas ingrahamii (strain DSM 17664 / CCUG 51855 / 37).